A 347-amino-acid polypeptide reads, in one-letter code: E3 ubiquitin-protein ligase ARK2C (347 aa).

Disordered regions lie at residues 23-79 and 268-289; these read PFQR…GTLH and PHKY…GEES. The interval 267 to 269 is ubiquitin binding; it reads FPH. The segment covering 276-285 has biased composition (basic and acidic residues); sequence PQDSKGKKDE. Positions 295 and 298 each coordinate Zn(2+). The segment at 295 to 336 adopts an RING-type; atypical zinc-finger fold; the sequence is CTICLSMLEDGEDVRRLPCMHLFHQLCVDQWLAMSKKCPICR. The interval 310–314 is ubiquitin binding; sequence RLPCM. Positions 318 and 321 each coordinate Zn(2+).

This sequence belongs to the Arkadia family. As to quaternary structure, monomer; binding to the ubiquitin-conjugating enzyme E2 does not trigger homodimerization. In terms of tissue distribution, expressed in neurons of the nervous system.

It is found in the nucleus. The catalysed reaction is S-ubiquitinyl-[E2 ubiquitin-conjugating enzyme]-L-cysteine + [acceptor protein]-L-lysine = [E2 ubiquitin-conjugating enzyme]-L-cysteine + N(6)-ubiquitinyl-[acceptor protein]-L-lysine.. Binds free ubiquitin non-covalently via its RING-type zinc finger. Ubiquitin-binding leads to enhance the E3 ubiquitin-protein ligase activity by stabilizing the ubiquitin-conjugating enzyme E2 (donor ubiquitin) in the 'closed' conformation and activating ubiquitin transfer. E3 ubiquitin-protein ligase that acts as a regulator of motor axon elongation. Required for efficient motor axon extension in the dorsal forelimb by enhancing the transcriptional responses of the SMAD1/SMAD5/SMAD8 effectors, which are activated downstream of BMP. Acts by mediating ubiquitination and degradation of SMAD inhibitors such as SMAD6, SMAD7, SKI and SNON isoform of SKIL. The sequence is that of E3 ubiquitin-protein ligase ARK2C from Mus musculus (Mouse).